The chain runs to 262 residues: Small ribosomal subunit protein mS23 (262 aa).

Positions 211 to 262 (SGQSDEAPEGEGSDMSAGEYDMAVEELAGQGSIPNTPQSTVVPEGTSAPAHA) are disordered. The span at 242–251 (SIPNTPQSTV) shows a compositional bias: polar residues.

Belongs to the mitochondrion-specific ribosomal protein mS23 family. Component of the mitochondrial small ribosomal subunit.

The protein localises to the mitochondrion. In Phaeosphaeria nodorum (strain SN15 / ATCC MYA-4574 / FGSC 10173) (Glume blotch fungus), this protein is Small ribosomal subunit protein mS23 (RSM25).